Consider the following 471-residue polypeptide: Tryptophanase (471 aa).

Lys-5, Lys-115, and Lys-156 each carry N6-acetyllysine. An N6-(pyridoxal phosphate)lysine modification is found at Lys-270. Position 450 is an N6-acetyllysine (Lys-450).

The protein belongs to the beta-eliminating lyase family. In terms of assembly, homotetramer. Pyridoxal 5'-phosphate serves as cofactor.

The enzyme catalyses L-tryptophan + H2O = indole + pyruvate + NH4(+). Its pathway is amino-acid degradation; L-tryptophan degradation via pyruvate pathway; indole and pyruvate from L-tryptophan: step 1/1. The polypeptide is Tryptophanase (tnaA) (Escherichia coli O157:H7).